The primary structure comprises 322 residues: Ferrochelatase (322 aa).

2 residues coordinate Fe cation: His-195 and Glu-276.

It belongs to the ferrochelatase family.

The protein resides in the cytoplasm. It catalyses the reaction heme b + 2 H(+) = protoporphyrin IX + Fe(2+). It functions in the pathway porphyrin-containing compound metabolism; protoheme biosynthesis; protoheme from protoporphyrin-IX: step 1/1. Its function is as follows. Catalyzes the ferrous insertion into protoporphyrin IX. This Edwardsiella ictaluri (strain 93-146) protein is Ferrochelatase.